The sequence spans 80 residues: Large ribosomal subunit protein uL29 (80 aa).

Belongs to the universal ribosomal protein uL29 family.

This is Large ribosomal subunit protein uL29 (rpmC) from Mycobacterium leprae (strain TN).